We begin with the raw amino-acid sequence, 447 residues long: M-phase inducer phosphatase 3 (447 aa).

An N-acetylserine modification is found at Ser2. Ser20, Ser38, Ser56, Ser60, and Ser63 each carry phosphoserine. At Thr66 the chain carries Phosphothreonine; by CDK1. Polar residues predominate over residues 81 to 90 (MSASPLTTSA). A disordered region spans residues 81–109 (MSASPLTTSADLEDNGSLDSSGPLDRQLT). Ser128 is modified (phosphoserine). Thr129 is modified (phosphothreonine). Ser192 is subject to Phosphoserine; by CDK1. Phosphoserine; by PLK3 is present on residues Ser213 and Ser220. The region spanning 294–401 (VIERFYIIDC…FFPEYMELCD (108 aa)) is the Rhodanese domain. The active site involves Cys350. Ser445 bears the Phosphoserine mark.

Belongs to the MPI phosphatase family. In terms of assembly, interacts with MAPK14 and 14-3-3 proteins. When phosphorylated on Ser-128 and/or Thr-129, interacts with PLK1. Interacts with MARK3/C-TAK1. In terms of processing, phosphorylated by PLK4. Phosphorylated by PLK1, leading to activate the phosphatase activity. Phosphorylated by CHEK1 and MAPKAPK2. This phosphorylation creates a binding site for 14-3-3 protein and inhibits the phosphatase activity. Phosphorylation by PLK3 at Ser-213 promotes nuclear translocation. Ser-220 is a minor phosphorylation site. Phosphorylation by CDK1 occurs at G2 and G2-M transition and leads to increased activity. As to expression, spleen and thymus.

Its subcellular location is the nucleus. The enzyme catalyses O-phospho-L-tyrosyl-[protein] + H2O = L-tyrosyl-[protein] + phosphate. Functionally, functions as a dosage-dependent inducer in mitotic control. Tyrosine protein phosphatase required for progression of the cell cycle. When phosphorylated, highly effective in activating G2 cells into prophase. Directly dephosphorylates CDK1 and activates its kinase activity. The sequence is that of M-phase inducer phosphatase 3 (Cdc25c) from Mus musculus (Mouse).